The primary structure comprises 343 residues: Twinfilin (343 aa).

ADF-H domains lie at 4-139 (QTGI…KHKV) and 177-312 (GINC…EELH). The interval 314–343 (RKLNLRPQFSKPKGPPSRGAKRLTKPQAVE) is disordered.

It belongs to the actin-binding proteins ADF family. Twinfilin subfamily. In terms of assembly, interacts with G-actin; ADP-actin form.

Its subcellular location is the cytoplasm. It localises to the cytoskeleton. The protein resides in the cell cortex. In terms of biological role, actin-binding protein involved in motile and morphological processes. Inhibits actin polymerization, likely by sequestering G-actin. This is Twinfilin (twf) from Anopheles gambiae (African malaria mosquito).